A 437-amino-acid polypeptide reads, in one-letter code: C-terminal-binding protein 2 (437 aa).

Residues S103, I183–I188, D207, C240–N246, T267–R269, and D293 contribute to the NAD(+) site. R269 is an active-site residue. Residue E298 is part of the active site. Residue H318 is the Proton donor of the active site. H318–W321 is an NAD(+) binding site. Residues P410–Q437 are disordered. Polar residues predominate over residues V415 to K426. Basic and acidic residues predominate over residues P427–Q437.

The protein belongs to the D-isomer specific 2-hydroxyacid dehydrogenase family. As to quaternary structure, interacts with the C-terminus of tcf7l1-a via the consensus motifs P-X-[DNS]-L-[STVA].

It localises to the nucleus. Functionally, corepressor targeting diverse transcription regulators. This chain is C-terminal-binding protein 2 (ctbp2), found in Xenopus laevis (African clawed frog).